The following is a 546-amino-acid chain: MATLIVLLYGLLAFGTVWLVRRQSKNHDAHRVMRNIPGPPSRSWMKGNIMQYFTRHGRAFQRDVALNYGPVVRLQGPLGRKILYVSDPKALHTIIIKEENVFEEPESTLITFNLLFGDCLVGSLGENHRRQRKLLNPVFSVNHMRHMLPMFYNVIFKLREVVMAKVRGGEKEIDVLEWTGRAALELIGQGGLGYSFDPLVSDKEARNEYGDALKAMLPALMNIESLRQILPHLVKMGPKWFRRLATDIFPNAHVQTVKHVVDTMSKRSQEIFREKKAALKSGDEAVLRQVGEGKDIMSILLRANTAASDADKLPESQMVAQMSLLVFAATDTTSNTLAHILQLLAEHSNVQSKLREELLQSGAGTGNTSYDELMKLPLLDAVCRETLRVHPPATLLVRVPRKDSILPLSEPVIGLDGTIIKDVPVPEGTEIVIGVFGSNVNKSLWGEDALEWKPERWLSPLPRAVNDASIPGVYSNLMTFLGGKRACIGFKFSEMEMKVVLAVMVSNFVFELEKEIEWNVAGVDYPTVVWDGDRPQLPLKVRVYKS.

The N-terminal stretch at 1–22 (MATLIVLLYGLLAFGTVWLVRR) is a signal peptide. N-linked (GlcNAc...) asparagine glycans are attached at residues asparagine 367 and asparagine 441. Heme is bound at residue cysteine 487.

It belongs to the cytochrome P450 family. Heme is required as a cofactor.

The protein operates within secondary metabolite biosynthesis. In terms of biological role, cytochrome P450 monooxygenase that is able to use testosterone, anthracene, carbazole, pyrene, phenanthrene and trans-stilbene as substrates for oxidation. These multifunctional properties against a series of polycyclic aromatic hydrocarbons (PAHs) suggest that CYP219 would play important roles, at least in part, in fungal metabolic systems involved in xenobiotic detoxification. The sequence is that of Cytochrome P450 monooxygenase 219 from Postia placenta (strain ATCC 44394 / Madison 698-R) (Brown rot fungus).